The sequence spans 318 residues: Phospho-N-acetylmuramoyl-pentapeptide-transferase (318 aa).

10 helical membrane passes run 5-25 (LKPL…VLAF), 50-70 (PTMG…VLAP), 71-91 (PSPL…IGLV), 115-135 (VLLG…GSVI), 139-159 (VTGW…LLLV), 173-193 (GLAA…ALTL), 198-218 (LVTF…YNFH), 222-242 (VFMG…LAIM), 248-268 (VLPV…LQVV), and 298-318 (VLFF…LLTI).

The protein belongs to the glycosyltransferase 4 family. MraY subfamily. Mg(2+) is required as a cofactor.

Its subcellular location is the cell membrane. The enzyme catalyses UDP-N-acetyl-alpha-D-muramoyl-L-alanyl-gamma-D-glutamyl-meso-2,6-diaminopimeloyl-D-alanyl-D-alanine + di-trans,octa-cis-undecaprenyl phosphate = di-trans,octa-cis-undecaprenyl diphospho-N-acetyl-alpha-D-muramoyl-L-alanyl-D-glutamyl-meso-2,6-diaminopimeloyl-D-alanyl-D-alanine + UMP. It functions in the pathway cell wall biogenesis; peptidoglycan biosynthesis. Its function is as follows. Catalyzes the initial step of the lipid cycle reactions in the biosynthesis of the cell wall peptidoglycan: transfers peptidoglycan precursor phospho-MurNAc-pentapeptide from UDP-MurNAc-pentapeptide onto the lipid carrier undecaprenyl phosphate, yielding undecaprenyl-pyrophosphoryl-MurNAc-pentapeptide, known as lipid I. This is Phospho-N-acetylmuramoyl-pentapeptide-transferase from Moorella thermoacetica (strain ATCC 39073 / JCM 9320).